The chain runs to 82 residues: Large ribosomal subunit protein bL31B (82 aa).

It belongs to the bacterial ribosomal protein bL31 family. Type B subfamily. As to quaternary structure, part of the 50S ribosomal subunit.

This Proteus mirabilis (strain HI4320) protein is Large ribosomal subunit protein bL31B.